A 253-amino-acid chain; its full sequence is Triosephosphate isomerase (253 aa).

9–11 provides a ligand contact to substrate; the sequence is NWK. The Electrophile role is filled by His97. Glu169 functions as the Proton acceptor in the catalytic mechanism. Substrate contacts are provided by residues Gly175, Ser215, and 236–237; that span reads GG.

Belongs to the triosephosphate isomerase family. Homodimer.

The protein localises to the cytoplasm. The catalysed reaction is D-glyceraldehyde 3-phosphate = dihydroxyacetone phosphate. It participates in carbohydrate biosynthesis; gluconeogenesis. It functions in the pathway carbohydrate degradation; glycolysis; D-glyceraldehyde 3-phosphate from glycerone phosphate: step 1/1. Involved in the gluconeogenesis. Catalyzes stereospecifically the conversion of dihydroxyacetone phosphate (DHAP) to D-glyceraldehyde-3-phosphate (G3P). The protein is Triosephosphate isomerase of Staphylococcus epidermidis (strain ATCC 35984 / DSM 28319 / BCRC 17069 / CCUG 31568 / BM 3577 / RP62A).